The sequence spans 518 residues: Vesicular inhibitory amino acid transporter (518 aa).

Topologically, residues 1–125 (MATLIRSKLS…WNVTNAIQGM (125 aa)) are cytoplasmic. The tract at residues 66 to 98 (EVPSGDPTAEGDSHYQRDGTGPPSSASKDEGLC) is disordered. A helical transmembrane segment spans residues 126–146 (FVLGLPYAILHGGYLGLFLII). The Lumenal, vesicle portion of the chain corresponds to 147-197 (FAAVVCCYTGKILIACLYEENEDGETVRVRDSYVDIANACCAPRFPKLGGR). The chain crosses the membrane as a helical span at residues 198–218 (VVNVAQIIELVMTCILYVVVS). At 219 to 258 (GNLMYNSFPSLPISQKSWSIIATAMLLPCAFLKNLKAVSK) the chain is on the cytoplasmic side. A helical membrane pass occupies residues 259-279 (FSLLCTLAHFVINVLVIAYCL). Over 280–298 (SRARDWAWDKVKFYIDVKK) the chain is Lumenal, vesicle. Residues 299 to 319 (FPISIGIIVFSYTSQIFLPSL) traverse the membrane as a helical segment. The Cytoplasmic segment spans residues 320–334 (EGNMQSPKEFHCMMN). Residues 335 to 355 (WTHIAACILKGLFALVAYLTW) traverse the membrane as a helical segment. The Lumenal, vesicle portion of the chain corresponds to 356–376 (ADETKEVITDNLPSTIRAVVN). A helical transmembrane segment spans residues 377 to 397 (LFLVAKALLSYPLPFFAAVEV). The Cytoplasmic portion of the chain corresponds to 398-431 (LEKSLFQEGARAFFPNCYGGDGRLKSWGLTLRCA). A helical transmembrane segment spans residues 432 to 452 (LVVFTLLMAIYVPHFALLMGL). The Lumenal, vesicle portion of the chain corresponds to 453 to 454 (TG). The helical transmembrane segment at 455 to 475 (SLTGAGLCFLLPSLFHLKLLW) threads the bilayer. Topologically, residues 476 to 482 (RKLQWHQ) are cytoplasmic. The helical transmembrane segment at 483-503 (VFFDVSIFVIGSICSVSGFVH) threads the bilayer. The Lumenal, vesicle segment spans residues 504–518 (SLEGLIEAFRFNIED).

It belongs to the amino acid/polyamine transporter 2 family.

The protein localises to the cytoplasmic vesicle membrane. It localises to the presynapse. It catalyses the reaction 4-aminobutanoate(out) + n H(+)(in) = 4-aminobutanoate(in) + n H(+)(out). It carries out the reaction glycine(out) + n H(+)(in) = glycine(in) + n H(+)(out). The enzyme catalyses beta-alanine(out) + n H(+)(in) = beta-alanine(in) + n H(+)(out). In terms of biological role, antiporter that exchanges vesicular protons for cytosolic 4-aminobutanoate or to a lesser extend glycine, thus allowing their secretion from nerve terminals. The transport is equally dependent on the chemical and electrical components of the proton gradient. May also transport beta-alanine. Acidification of GABAergic synaptic vesicles is a prerequisite for 4-aminobutanoate uptake. This is Vesicular inhibitory amino acid transporter from Xenopus tropicalis (Western clawed frog).